A 55-amino-acid polypeptide reads, in one-letter code: ATP synthase protein 8 (55 aa).

A helical transmembrane segment spans residues 7-24 (NPWFFIMIISWLTYSMII). The interval 34–55 (TNPPARKEPTTNTTTPWNWPWT) is disordered. Residues 43 to 55 (TTNTTTPWNWPWT) show a composition bias toward low complexity.

This sequence belongs to the ATPase protein 8 family. F-type ATPases have 2 components, CF(1) - the catalytic core - and CF(0) - the membrane proton channel.

It is found in the mitochondrion membrane. In terms of biological role, mitochondrial membrane ATP synthase (F(1)F(0) ATP synthase or Complex V) produces ATP from ADP in the presence of a proton gradient across the membrane which is generated by electron transport complexes of the respiratory chain. F-type ATPases consist of two structural domains, F(1) - containing the extramembraneous catalytic core and F(0) - containing the membrane proton channel, linked together by a central stalk and a peripheral stalk. During catalysis, ATP synthesis in the catalytic domain of F(1) is coupled via a rotary mechanism of the central stalk subunits to proton translocation. Part of the complex F(0) domain. Minor subunit located with subunit a in the membrane. The protein is ATP synthase protein 8 (MT-ATP8) of Vireo altiloquus (Black-whiskered vireo).